The chain runs to 568 residues: Poly(A) polymerase (568 aa).

Residues 87–89 (YGS), 99–102 (SDID), 100–102 (DID), aspartate 154, lysine 215, tyrosine 224, and 233–234 (GV) each bind ATP. Residues aspartate 100, aspartate 102, and aspartate 154 each contribute to the Mg(2+) site. 2 positions are modified to phosphoserine: serine 452 and serine 550. Residues 525-568 (NEKRPSKKSKRKNLDARHETVKRSKSDAASGDNINGTTAAVDVN) form a disordered region. Residues 536–550 (KNLDARHETVKRSKS) show a composition bias toward basic and acidic residues.

It belongs to the poly(A) polymerase family. In terms of assembly, component of the cleavage and polyadenylation factor (CPF) complex, which is composed of PTI1, SYC1, SSU72, GLC7, MPE1, REF2, PFS2, PTA1, YSH1/BRR5, SWD2, CFT2/YDH1, YTH1, CFT1/YHH1, FIP1 and PAP1. Interacts with FIR1 and RRP6. The cofactor is Mg(2+). Mn(2+) is required as a cofactor.

The protein localises to the nucleus. The catalysed reaction is RNA(n) + ATP = RNA(n)-3'-adenine ribonucleotide + diphosphate. In terms of biological role, polymerase component of the cleavage and polyadenylation factor (CPF) complex, which plays a key role in polyadenylation-dependent pre-mRNA 3'-end formation and cooperates with cleavage factors including the CFIA complex and NAB4/CFIB. In Saccharomyces cerevisiae (strain ATCC 204508 / S288c) (Baker's yeast), this protein is Poly(A) polymerase (PAP1).